The chain runs to 476 residues: Protein transport protein Sec61 subunit alpha isoform 1 (476 aa).

At 2–28 (AIKFLEVIKPFCVILPEIQKPERKIQF) the chain is on the cytoplasmic side. A helical membrane pass occupies residues 29–46 (KEKVLWTAITLFIFLVCC). Residues 47 to 80 (QIPLFGIMSSDSADPFYWMRVILASNRGTLMELG) are Lumenal-facing. Residues 81–97 (ISPIVTSGLIMQLLAGA) form a helical membrane-spanning segment. Topologically, residues 98–109 (KIIEVGDTPKDR) are cytoplasmic. Residues 110-131 (ALFNGAQKLFGMIITIGQSIVY) traverse the membrane as a helical segment. Topologically, residues 132 to 148 (VMTGMYGDPSEMGAGIC) are lumenal. A helical transmembrane segment spans residues 149-167 (LLITIQLFVAGLIVLLLDE). At 168 to 177 (LLQKGYGLGS) the chain is on the cytoplasmic side. Residues 178–196 (GISLFIATNICETIVWKAF) form a helical membrane-spanning segment. Topologically, residues 197 to 241 (SPTTVNTGRGMEFEGAIIALFHLLATRTDKVRALREAFYRQNLPN) are lumenal. The chain crosses the membrane as a helical span at residues 242–259 (LMNLIATIFVFAVVIYFQ). Residues 260-285 (GFRVDLPIKSARYRGQYNTYPIKLFY) are Cytoplasmic-facing. A helical membrane pass occupies residues 286–306 (TSNIPIILQSALVSNLYVISQ). The Lumenal segment spans residues 307–356 (MLSARFSGNLLVSLLGTWSDTSSGGPARAYPVGGLCHYLSPPESFGSVLE). A helical membrane pass occupies residues 357–379 (DPVHAVVYIVFMLGSCAFFSKTW). The Cytoplasmic portion of the chain corresponds to 380-420 (IEVSGSSAKDVAKQLKEQQMVMRGHRETSMVHELNRYIPTA). Residues 421 to 437 (AAFGGLCIGALSVLADF) traverse the membrane as a helical segment. Residues 438–443 (LGAIGS) lie on the Lumenal side of the membrane. A helical membrane pass occupies residues 444-458 (GTGILLAVTIIYQYF). At 459–476 (EIFVKEQSEVGSMGALLF) the chain is on the cytoplasmic side.

Belongs to the SecY/SEC61-alpha family. In terms of assembly, the SEC61 channel-forming translocon complex consists of channel-forming core components SEC61A1, SEC61B and SEC61G and different auxiliary components such as SEC62 and SEC63. The SEC61 channel associates with the multi-pass translocon (MPT) complex.

The protein localises to the endoplasmic reticulum membrane. Its function is as follows. Component of SEC61 channel-forming translocon complex that mediates transport of signal peptide-containing precursor polypeptides across the endoplasmic reticulum (ER). Forms a ribosome receptor and a gated pore in the ER membrane, both functions required for cotranslational translocation of nascent polypeptides. May cooperate with auxiliary protein SEC62, SEC63 and HSPA5/BiP to enable post-translational transport of small presecretory proteins. The SEC61 channel is also involved in ER membrane insertion of transmembrane proteins: it mediates membrane insertion of the first few transmembrane segments of proteins, while insertion of subsequent transmembrane regions of multi-pass membrane proteins is mediated by the multi-pass translocon (MPT) complex. The SEC61 channel cooperates with the translocating protein TRAM1 to import nascent proteins into the ER. Controls the passive efflux of calcium ions from the ER lumen to the cytosol through SEC61 channel, contributing to the maintenance of cellular calcium homeostasis. Plays a critical role in nephrogenesis, specifically at pronephros stage. The sequence is that of Protein transport protein Sec61 subunit alpha isoform 1 (SEC61A1) from Canis lupus familiaris (Dog).